The following is a 317-amino-acid chain: L-lactate dehydrogenase (317 aa).

Residues V16, D37, K42, Y68, and G82–A83 each bind NAD(+). Substrate-binding residues include Q85 and R91. Residues T104, A121 to N123, and S146 each bind NAD(+). N123–D126 contacts substrate. A substrate-binding site is contributed by D151–R154. Positions 156 and 171 each coordinate beta-D-fructose 1,6-bisphosphate. The active-site Proton acceptor is the H178. Y222 is subject to Phosphotyrosine. T231 contributes to the substrate binding site.

Belongs to the LDH/MDH superfamily. LDH family. In terms of assembly, homotetramer.

It is found in the cytoplasm. The catalysed reaction is (S)-lactate + NAD(+) = pyruvate + NADH + H(+). It participates in fermentation; pyruvate fermentation to lactate; (S)-lactate from pyruvate: step 1/1. Its activity is regulated as follows. Allosterically activated by fructose 1,6-bisphosphate (FBP). Functionally, catalyzes the conversion of lactate to pyruvate. The polypeptide is L-lactate dehydrogenase (Corynebacterium efficiens (strain DSM 44549 / YS-314 / AJ 12310 / JCM 11189 / NBRC 100395)).